A 332-amino-acid chain; its full sequence is D-alanine--D-alanine ligase (332 aa).

Residues 1-17 (MPMTMTQSATNPTATPV) are compositionally biased toward polar residues. Residues 1 to 28 (MPMTMTQSATNPTATPVSANKASANAAT) are disordered. Low complexity predominate over residues 18–28 (SANKASANAAT). Residues 132–329 (KQLWHGCGLS…FEQLCWHILA (198 aa)) form the ATP-grasp domain. 158–213 (VNTLGLPLIVKPVHEGSSIGMSKVNTLDELPKAYEVAAGCGDVVMAEKWITGREFT) lines the ATP pocket. Aspartate 283, glutamate 296, and asparagine 298 together coordinate Mg(2+).

This sequence belongs to the D-alanine--D-alanine ligase family. Requires Mg(2+) as cofactor. Mn(2+) is required as a cofactor.

Its subcellular location is the cytoplasm. The enzyme catalyses 2 D-alanine + ATP = D-alanyl-D-alanine + ADP + phosphate + H(+). Its pathway is cell wall biogenesis; peptidoglycan biosynthesis. Functionally, cell wall formation. The chain is D-alanine--D-alanine ligase from Psychrobacter sp. (strain PRwf-1).